Reading from the N-terminus, the 427-residue chain is ATP-sensitive inward rectifier potassium channel 12 (427 aa).

At 1-77 (MTASGRTNPY…LADMFTTCVD (77 aa)) the chain is on the cytoplasmic side. At C75 the chain carries S-nitrosocysteine. A helical membrane pass occupies residues 78 to 104 (IRWRYMLLIFSLAFLASWLLFGVIFWV). Residues R79 and R81 each coordinate a 1,2-diacyl-sn-glycero-3-phospho-(1D-myo-inositol-4,5-bisphosphate). At 105–129 (IAVAHGDLEPAEAHGRTPCVLQVHG) the chain is on the extracellular side. The cysteines at positions 123 and 155 are disulfide-linked. The helical; Pore-forming intramembrane region spans 130-146 (FMAAFLFSIETQTTIGY). The K(+) site is built by T143, I144, G145, and Y146. The short motif at 143–148 (TIGYGL) is the Selectivity filter element. Residues 147–155 (GLRCVTEEC) lie on the Extracellular side of the membrane. The helical transmembrane segment at 156 to 183 (PVAVFMVVAQSIVGCIIDSFMIGAIMAK) threads the bilayer. K183 and K188 together coordinate a 1,2-diacyl-sn-glycero-3-phospho-(1D-myo-inositol-4,5-bisphosphate). The Cytoplasmic portion of the chain corresponds to 184-427 (MARPKKRAQT…QRPYRRESEI (244 aa)). The segment covering 387-396 (DEEDEVDGEQ) has biased composition (acidic residues). The segment at 387-427 (DEEDEVDGEQDSLGPQARRDFDRPQAGTALEQRPYRRESEI) is disordered. The PDZ-binding motif lies at 425-427 (SEI).

Belongs to the inward rectifier-type potassium channel (TC 1.A.2.1) family. KCNJ12 subfamily. Homotetramer. Forms heteromer with KCNJ4. Association, via its PDZ-recognition domain, with LIN7A, LIN7B, LIN7C, DLG1, CASK and APBA1 plays a key role in its localization and trafficking.

The protein resides in the membrane. The enzyme catalyses K(+)(in) = K(+)(out). Its activity is regulated as follows. Activated by phosphatidylinositol 4,5-biphosphate (PtdIns(4,5)P2). PtdIns(4,5)P2 binding to the cytoplasmic side of the channel triggers a conformation change leading to channel opening. Inward rectifying potassium channel that probably participates in controlling the resting membrane potential in electrically excitable cells. Probably participates in establishing action potential waveform and excitability of neuronal and muscle tissues. Inward rectifier potassium channels are characterized by a greater tendency to allow potassium to flow into the cell rather than out of it. Their voltage dependence is regulated by the concentration of extracellular potassium; as external potassium is raised, the voltage range of the channel opening shifts to more positive voltages. The inward rectification is mainly due to the blockage of outward current by internal magnesium. The chain is ATP-sensitive inward rectifier potassium channel 12 (KCNJ12) from Bos taurus (Bovine).